Consider the following 169-residue polypeptide: NAD(P)H-quinone oxidoreductase subunit J, chloroplastic (169 aa).

It belongs to the complex I 30 kDa subunit family. As to quaternary structure, NDH is composed of at least 16 different subunits, 5 of which are encoded in the nucleus.

It localises to the plastid. The protein resides in the chloroplast thylakoid membrane. The catalysed reaction is a plastoquinone + NADH + (n+1) H(+)(in) = a plastoquinol + NAD(+) + n H(+)(out). The enzyme catalyses a plastoquinone + NADPH + (n+1) H(+)(in) = a plastoquinol + NADP(+) + n H(+)(out). Functionally, NDH shuttles electrons from NAD(P)H:plastoquinone, via FMN and iron-sulfur (Fe-S) centers, to quinones in the photosynthetic chain and possibly in a chloroplast respiratory chain. The immediate electron acceptor for the enzyme in this species is believed to be plastoquinone. Couples the redox reaction to proton translocation, and thus conserves the redox energy in a proton gradient. The sequence is that of NAD(P)H-quinone oxidoreductase subunit J, chloroplastic from Marchantia polymorpha (Common liverwort).